Here is a 353-residue protein sequence, read N- to C-terminus: Phospho-N-acetylmuramoyl-pentapeptide-transferase (353 aa).

Transmembrane regions (helical) follow at residues L24 to A44, T66 to A86, L88 to F108, F129 to D149, P160 to T180, G192 to A212, V229 to Y249, V256 to V276, I281 to V301, and K330 to L350.

It belongs to the glycosyltransferase 4 family. MraY subfamily. Mg(2+) is required as a cofactor.

The protein localises to the cell inner membrane. The catalysed reaction is UDP-N-acetyl-alpha-D-muramoyl-L-alanyl-gamma-D-glutamyl-meso-2,6-diaminopimeloyl-D-alanyl-D-alanine + di-trans,octa-cis-undecaprenyl phosphate = di-trans,octa-cis-undecaprenyl diphospho-N-acetyl-alpha-D-muramoyl-L-alanyl-D-glutamyl-meso-2,6-diaminopimeloyl-D-alanyl-D-alanine + UMP. The protein operates within cell wall biogenesis; peptidoglycan biosynthesis. Catalyzes the initial step of the lipid cycle reactions in the biosynthesis of the cell wall peptidoglycan: transfers peptidoglycan precursor phospho-MurNAc-pentapeptide from UDP-MurNAc-pentapeptide onto the lipid carrier undecaprenyl phosphate, yielding undecaprenyl-pyrophosphoryl-MurNAc-pentapeptide, known as lipid I. This is Phospho-N-acetylmuramoyl-pentapeptide-transferase from Helicobacter pylori (strain Shi470).